A 509-amino-acid polypeptide reads, in one-letter code: Serine/threonine protein kinase OSK4 (509 aa).

In terms of domain architecture, Protein kinase spans 17–269 (YNLGRTLGIG…IREIREHQWF (253 aa)). Residues 23 to 31 (LGIGSFGKV) and lysine 46 contribute to the ATP site. Aspartate 140 functions as the Proton acceptor in the catalytic mechanism. The UBA domain maps to 290–330 (MIDEDTLQDVVNLGYEKDHVCESLRNRLQNEATVAYYLLLD). Positions 460–508 (NGRLPAVIKFEIQLYKSRDEKYLLDMQRVTGPQLLFLDFCAAFLTKLRV) constitute a KA1 domain.

It belongs to the protein kinase superfamily. Ser/Thr protein kinase family. As to quaternary structure, interacts with HDR1. As to expression, strongly expressed in immature seeds. Mostly expressed in panicles, leaf sheaths and roots, and to a lower extent, in germinating seeds and leaf blades.

It localises to the nucleus. It carries out the reaction L-seryl-[protein] + ATP = O-phospho-L-seryl-[protein] + ADP + H(+). The enzyme catalyses L-threonyl-[protein] + ATP = O-phospho-L-threonyl-[protein] + ADP + H(+). Suppressor of flowering in long days (LD) via the that up-regulation of HD1 and the down-regulation of EHD1. Can phosphorylate HD1 in the presence of HDR1. In Oryza sativa subsp. indica (Rice), this protein is Serine/threonine protein kinase OSK4.